The sequence spans 469 residues: 6-phosphofructo-2-kinase/fructose-2,6-bisphosphatase 4 (469 aa).

The segment at 1-249 (MASPRELTQN…YYLMNIHVTP (249 aa)) is 6-phosphofructo-2-kinase. Ser-29 bears the Phosphoserine; by PKC mark. 46–54 (GLPARGKTY) lines the ATP pocket. Residues Arg-79 and Arg-103 each contribute to the beta-D-fructose 6-phosphate site. Asp-129 is an active-site residue. Thr-131 and Arg-137 together coordinate beta-D-fructose 6-phosphate. Cys-159 is a catalytic residue. 168–173 (NIVQVK) serves as a coordination point for ATP. 3 residues coordinate beta-D-fructose 6-phosphate: Lys-173, Arg-194, and Tyr-198. The segment at 250 to 469 (RSIYLCRHGE…EALVTVPAHQ (220 aa)) is fructose-2,6-bisphosphatase. A beta-D-fructose 2,6-bisphosphate-binding site is contributed by Arg-256. His-257 acts as the Tele-phosphohistidine intermediate in catalysis. The beta-D-fructose 2,6-bisphosphate site is built by Asn-263, Gly-269, and Arg-306. The active-site Proton donor/acceptor is Glu-326. Residues Tyr-337, Arg-351, Lys-355, Tyr-366, Gln-392, and Arg-396 each coordinate beta-D-fructose 2,6-bisphosphate. 348–351 (FALR) contributes to the ATP binding site. Residues 392–396 (QAVMR) and Tyr-428 contribute to the ATP site. Thr-444 is subject to Phosphothreonine; by PKC.

In the C-terminal section; belongs to the phosphoglycerate mutase family. Homodimer. Testis.

It catalyses the reaction beta-D-fructose 2,6-bisphosphate + H2O = beta-D-fructose 6-phosphate + phosphate. It carries out the reaction beta-D-fructose 6-phosphate + ATP = beta-D-fructose 2,6-bisphosphate + ADP + H(+). Its activity is regulated as follows. The most important regulatory mechanism of these opposing activities is by phosphorylation and dephosphorylation of the enzyme. Synthesis and degradation of fructose 2,6-bisphosphate. The protein is 6-phosphofructo-2-kinase/fructose-2,6-bisphosphatase 4 (Pfkfb4) of Rattus norvegicus (Rat).